The primary structure comprises 1152 residues: Syntaxin-binding protein 5 (1152 aa).

Residues T14 to E35 form a disordered region. Low complexity predominate over residues S17–Q28. WD repeat units lie at residues S62–Q95, V102–F141, V146–I182, H201–Y235, I241–P273, P295–A337, I345–L379, T401–K478, Q506–I620, and T634–G696. Disordered regions lie at residues T557 to D596 and S675 to N731. Position 693 is a phosphoserine (S693). Residues S713–H722 are compositionally biased toward low complexity. S724 is subject to Phosphoserine; by PKA. S760 is subject to Phosphoserine. Position 763 is a phosphothreonine (T763). S783 carries the phosphoserine modification. Position 785 is a phosphothreonine (T785). S786 carries the post-translational modification Phosphoserine. 4 WD repeats span residues I795–I852, R861–A935, I940–Y984, and C998–Q1021. Residues W879 to K893 show a composition bias toward basic and acidic residues. The tract at residues W879–S907 is disordered. Residues S901 and S903 each carry the phosphoserine modification. T1040 carries the post-translational modification Phosphothreonine. Residues S1059 and S1132 each carry the phosphoserine modification. In terms of domain architecture, v-SNARE coiled-coil homology spans G1087–K1147.

Belongs to the WD repeat L(2)GL family. In terms of assembly, part of a complex that contains STXBP5, STX4A and SNAP23. Interacts with STX1A and STX4A via its v-SNARE homology domain. Part of a complex that contains STX1, STXBP5, SNAP25 and SYT1. In terms of processing, phosphorylation by PKA reduces interaction with STX1A and enhances synaptic neurotransmitter release. In terms of tissue distribution, isoform 1 is detected in heart, brain, lung, liver, skeletal muscle, kidney and testis. Isoform 2 is detected in brain and in testis. Isoform 3 is detected in testis.

It localises to the cytoplasm. The protein localises to the cell membrane. It is found in the cytoplasmic vesicle membrane. Its subcellular location is the synapse. The protein resides in the cytoplasmic vesicle. It localises to the secretory vesicle. The protein localises to the synaptic vesicle. Its function is as follows. Inhibits translocation of GLUT4 from intracellular vesicles to the plasma membrane. Plays a regulatory role in calcium-dependent exocytosis and neurotransmitter release. Inhibits membrane fusion between transport vesicles and the plasma membrane. May modulate the assembly of trans-SNARE complexes between transport vesicles and the plasma membrane. Competes with STXBP1 for STX1 binding. This Rattus norvegicus (Rat) protein is Syntaxin-binding protein 5 (Stxbp5).